Consider the following 1357-residue polypeptide: DNA-directed RNA polymerase subunit beta (1357 aa).

This sequence belongs to the RNA polymerase beta chain family. As to quaternary structure, the RNAP catalytic core consists of 2 alpha, 1 beta, 1 beta' and 1 omega subunit. When a sigma factor is associated with the core the holoenzyme is formed, which can initiate transcription.

The enzyme catalyses RNA(n) + a ribonucleoside 5'-triphosphate = RNA(n+1) + diphosphate. DNA-dependent RNA polymerase catalyzes the transcription of DNA into RNA using the four ribonucleoside triphosphates as substrates. The protein is DNA-directed RNA polymerase subunit beta of Neorickettsia sennetsu (Ehrlichia sennetsu).